The primary structure comprises 373 residues: 2-aminoethylphosphonate--pyruvate transaminase (373 aa).

Position 191 is an N6-(pyridoxal phosphate)lysine (lysine 191).

This sequence belongs to the class-V pyridoxal-phosphate-dependent aminotransferase family. PhnW subfamily. Homodimer. Requires pyridoxal 5'-phosphate as cofactor.

The catalysed reaction is (2-aminoethyl)phosphonate + pyruvate = phosphonoacetaldehyde + L-alanine. Functionally, involved in phosphonate degradation. The polypeptide is 2-aminoethylphosphonate--pyruvate transaminase (Burkholderia ambifaria (strain MC40-6)).